The following is an 86-amino-acid chain: Neurotoxin-like protein NTL2 (86 aa).

Positions 1–21 are cleaved as a signal peptide; the sequence is MKTLLLSLVVVTIVCLDLGYT. 4 disulfides stabilise this stretch: cysteine 24-cysteine 45, cysteine 38-cysteine 63, cysteine 67-cysteine 78, and cysteine 79-cysteine 84.

The protein belongs to the three-finger toxin family. Short-chain subfamily. Orphan group I sub-subfamily. In terms of tissue distribution, expressed by the venom gland.

It localises to the secreted. This Naja atra (Chinese cobra) protein is Neurotoxin-like protein NTL2.